The primary structure comprises 502 residues: Glutamate--tRNA ligase (502 aa).

The 'HIGH' region motif lies at 21–31; the sequence is PSPTGVPHVGM. The 'KMSKS' region signature appears at 265 to 269; that stretch reads KLSKR. ATP is bound at residue Lys268.

It belongs to the class-I aminoacyl-tRNA synthetase family. Glutamate--tRNA ligase type 1 subfamily. Monomer.

The protein localises to the cytoplasm. The catalysed reaction is tRNA(Glu) + L-glutamate + ATP = L-glutamyl-tRNA(Glu) + AMP + diphosphate. Functionally, catalyzes the attachment of glutamate to tRNA(Glu) in a two-step reaction: glutamate is first activated by ATP to form Glu-AMP and then transferred to the acceptor end of tRNA(Glu). The chain is Glutamate--tRNA ligase from Mycobacterium leprae (strain TN).